We begin with the raw amino-acid sequence, 397 residues long: Succinyl-diaminopimelate desuccinylase (397 aa).

His-73 contributes to the Zn(2+) binding site. Asp-75 is an active-site residue. A Zn(2+)-binding site is contributed by Asp-106. Glu-140 functions as the Proton acceptor in the catalytic mechanism. The Zn(2+) site is built by Glu-141, Glu-169, and His-366.

Belongs to the peptidase M20A family. DapE subfamily. As to quaternary structure, homodimer. Zn(2+) serves as cofactor. Requires Co(2+) as cofactor.

The enzyme catalyses N-succinyl-(2S,6S)-2,6-diaminopimelate + H2O = (2S,6S)-2,6-diaminopimelate + succinate. Its pathway is amino-acid biosynthesis; L-lysine biosynthesis via DAP pathway; LL-2,6-diaminopimelate from (S)-tetrahydrodipicolinate (succinylase route): step 3/3. Functionally, catalyzes the hydrolysis of N-succinyl-L,L-diaminopimelic acid (SDAP), forming succinate and LL-2,6-diaminopimelate (DAP), an intermediate involved in the bacterial biosynthesis of lysine and meso-diaminopimelic acid, an essential component of bacterial cell walls. The sequence is that of Succinyl-diaminopimelate desuccinylase from Rhizobium leguminosarum bv. trifolii (strain WSM2304).